The sequence spans 85 residues: Small ribosomal subunit protein bS20 (85 aa).

Residues 1–24 (MANIKSAIKRAKLSEERRSHNASI) form a disordered region.

This sequence belongs to the bacterial ribosomal protein bS20 family.

Functionally, binds directly to 16S ribosomal RNA. This Bacillus mycoides (strain KBAB4) (Bacillus weihenstephanensis) protein is Small ribosomal subunit protein bS20.